A 603-amino-acid chain; its full sequence is MDQPHRRTRKWHLMDLSVSTLLMSLALVLPSCVSAYQPVYFRSQEATPFIPPQVPSADPQSLSGTHEFTLRHIVQRGAYEYPELHRRLDIKPNTQLRTVSEDGIEDNEPAVFNVPFVASSEPVTIERLADRRLSVIEEHLAAARSAGSAVTLSSSQWTKDTLAGPNVTDKKTILTFAKMTANDYIEVPGTEDWQDINGKLNYSTSFGWQNDGLRGHIYADDTNSTIVISLKGTSPALFDGAGTTTNDKVNDNLYFSCCCGQGGSYLWREVCDCQKSAFNANLTCIIEAMNDENRYYRASLDLYSNVTELYPNANVWLTGHSLGGAMASLLGLTFGLPVVTFEAVPEALPAARLGLPTPPGYNPALPQARKFTGAYHFGHTADPVYMGTCNGVSSVCTWGGYAMESACHTGQMCVYDTVADKGWRVAIGTHRIKAVISDVIEVYDDLPQCAPEEECYDCELWKFFRSNGSEITTTSSTTTTSTITTSTRTTTCKTPGWWGCLDDSTTTDPPTTTTTTSSTCKTPGWFGCKDPTSTTATTTTEAPTTTTTCKDPGWFGCRDPTSPTTSTAPQTSTCETPGFFWGCYDTQTAVDHLITPAPILIDL.

Residues Met-1–Thr-20 lie on the Cytoplasmic side of the membrane. A helical; Signal-anchor for type II membrane protein membrane pass occupies residues Leu-21–Phe-41. The Lumenal portion of the chain corresponds to Arg-42–Leu-603. N-linked (GlcNAc...) asparagine glycans are attached at residues Asn-166, Asn-201, Asn-223, Asn-281, and Asn-305. Ser-321 functions as the Charge relay system in the catalytic mechanism. N-linked (GlcNAc...) asparagine glycosylation occurs at Asn-467.

It belongs to the AB hydrolase superfamily. Lipase family. Binds to both phosphatidylinositol (PI) and phosphatidylinositol 3,5-bisphosphate (PIP2).

Its subcellular location is the endosome. The protein localises to the multivesicular body membrane. The protein resides in the prevacuolar compartment membrane. It catalyses the reaction a triacylglycerol + H2O = a diacylglycerol + a fatty acid + H(+). In terms of biological role, lipase which is essential for lysis of subvacuolar cytoplasm to vacuole targeted bodies and intravacuolar autophagic bodies. Involved in the lysis of intravacuolar multivesicular body (MVB) vesicles. The intravacuolar membrane disintegration by atg15 is critical to life span extension. The chain is Putative lipase atg15 (atg15) from Emericella nidulans (strain FGSC A4 / ATCC 38163 / CBS 112.46 / NRRL 194 / M139) (Aspergillus nidulans).